A 136-amino-acid polypeptide reads, in one-letter code: Cytidine deaminase (136 aa).

Residues 1 to 128 (MDVEKLIAES…KLLPGAFSKE (128 aa)) form the CMP/dCMP-type deaminase domain. 42–44 (NIE) serves as a coordination point for substrate. Cys53 contacts Zn(2+). The Proton donor role is filled by Glu55. Zn(2+) contacts are provided by Cys86 and Cys89.

Belongs to the cytidine and deoxycytidylate deaminase family. It depends on Zn(2+) as a cofactor.

The enzyme catalyses cytidine + H2O + H(+) = uridine + NH4(+). It catalyses the reaction 2'-deoxycytidine + H2O + H(+) = 2'-deoxyuridine + NH4(+). Its function is as follows. This enzyme scavenges exogenous and endogenous cytidine and 2'-deoxycytidine for UMP synthesis. This is Cytidine deaminase (cdd) from Sporosarcina psychrophila (Bacillus psychrophilus).